Reading from the N-terminus, the 335-residue chain is Ketol-acid reductoisomerase (NADP(+)) (335 aa).

In terms of domain architecture, KARI N-terminal Rossmann spans 5-185 (SKIYTDKDSN…GATRAGVIPT (181 aa)). NADP(+)-binding positions include 28–31 (YGSQ), Ser-56, and 86–89 (DMVQ). The active site involves His-111. Gly-137 lines the NADP(+) pocket. The KARI C-terminal knotted domain maps to 186–331 (TFKEETETDL…NQLKDLIQKG (146 aa)). Asp-194, Glu-198, Glu-230, and Glu-234 together coordinate Mg(2+). Ser-255 is a substrate binding site.

The protein belongs to the ketol-acid reductoisomerase family. Mg(2+) serves as cofactor.

It carries out the reaction (2R)-2,3-dihydroxy-3-methylbutanoate + NADP(+) = (2S)-2-acetolactate + NADPH + H(+). The enzyme catalyses (2R,3R)-2,3-dihydroxy-3-methylpentanoate + NADP(+) = (S)-2-ethyl-2-hydroxy-3-oxobutanoate + NADPH + H(+). The protein operates within amino-acid biosynthesis; L-isoleucine biosynthesis; L-isoleucine from 2-oxobutanoate: step 2/4. Its pathway is amino-acid biosynthesis; L-valine biosynthesis; L-valine from pyruvate: step 2/4. In terms of biological role, involved in the biosynthesis of branched-chain amino acids (BCAA). Catalyzes an alkyl-migration followed by a ketol-acid reduction of (S)-2-acetolactate (S2AL) to yield (R)-2,3-dihydroxy-isovalerate. In the isomerase reaction, S2AL is rearranged via a Mg-dependent methyl migration to produce 3-hydroxy-3-methyl-2-ketobutyrate (HMKB). In the reductase reaction, this 2-ketoacid undergoes a metal-dependent reduction by NADPH to yield (R)-2,3-dihydroxy-isovalerate. This Saccharolobus islandicus (strain Y.G.57.14 / Yellowstone #1) (Sulfolobus islandicus) protein is Ketol-acid reductoisomerase (NADP(+)).